We begin with the raw amino-acid sequence, 493 residues long: Transcript termination protein OPG145 (493 aa).

The Helicase ATP-binding domain maps to 100–256 (MIKLKRPLYI…NSIINIAKLS (157 aa)). ATP is bound at residue 113 to 120 (LACGFGKT). The short motif at 206–209 (DESH) is the DESH box element.

This sequence belongs to the helicase family. Poxviruses subfamily. In terms of assembly, interacts with OPG087. Might be part of a transcription complex composed at least of OPG087, OPG110, and OPG145.

The protein localises to the virion. Its function is as follows. DNA helicase which seems to act as a postreplicative transcription termination factor. Involved in ATP-dependent release of nascent RNA. Forms a stable complex with single-stranded DNA, and to a lesser extent RNA. The protein is Transcript termination protein OPG145 (OPG145) of Variola virus (isolate Human/India/Ind3/1967) (VARV).